Here is a 384-residue protein sequence, read N- to C-terminus: MADKFYRPTYLKVDLEAILKNYQVLGKLQPNKTVMPVIKANAYGMGSVNVGHYLKKHGAEFFAVATLDEAIELRMHGIDTKILILGVVMPKDINKAIQHRVALTVPSYAWLNEAIKYLDEDLEKDLWLHVKIDTGMGRLGVKSAEDYQKTVALIQSHEHLIFEGVFTHFAQADEDSPHTKEQYEIFENWVDTIPHPSYVHAQNSAGTILFDAPICNMVRTGISLYGYYPSEYVEEQTNAELYPSAEWITEIVDIKYLNIGDTVSYGSTYTAEKSEKIAILPVGYADGFPRMMQGTNVEVNGQQCTIIGRVCMDQMMIALPENEDINVGDKVTLLNREHSGPQSLLSHAKQQQTINYEVLCRIGRRVPRIYEPEKVFDIVNELQK.

The active-site Proton acceptor; specific for D-alanine is the Lys-39. The residue at position 39 (Lys-39) is an N6-(pyridoxal phosphate)lysine. Arg-138 contacts substrate. Catalysis depends on Tyr-265, which acts as the Proton acceptor; specific for L-alanine. Residue Met-312 participates in substrate binding.

It belongs to the alanine racemase family. It depends on pyridoxal 5'-phosphate as a cofactor.

It carries out the reaction L-alanine = D-alanine. The protein operates within amino-acid biosynthesis; D-alanine biosynthesis; D-alanine from L-alanine: step 1/1. Its function is as follows. Catalyzes the interconversion of L-alanine and D-alanine. May also act on other amino acids. The chain is Alanine racemase (alr) from Staphylococcus carnosus (strain TM300).